Reading from the N-terminus, the 138-residue chain is Fusaristatin A biosynthesis cluster protein FGSG_08206 (138 aa).

In terms of domain architecture, Stress-response A/B barrel spans 33 to 130 (VHRVTMFKMP…TIDGMMTVFF (98 aa)).

It functions in the pathway secondary metabolite biosynthesis. Part of the gene cluster that mediates the biosynthesis of the lipopeptide fusaristatin A. Fusaristatin A consists of a polyketide chain linked to three amino acid residues glutamine (Gln), dehydroalanine (dehydro-Ala), and beta-aminoisobutyric acid. The biosynthesis starts with formation of a linear polyketide chain by the highly reducing polyketide synthase PKS6. The gene cluster does not contain an acyl-CoA ligase or an acyl-transferase, and it is therefore predicted that the polyketide is transferred directly to the nonribosomal peptide synthetase NRPS7. Modules 1-3 from NRPS7 incorporate dehydro-Ala, Gln, and beta-aminoisobutyric acid in the compound, which is released by cyclization. The beta-aminoisobutyric acid units are most likely not freely available to the NRPS, but can be synthesized from thymine, which requires a dehydrogenase, a monooxygenase, and an aminotransferase. The fusaristatin A cluster contains a cytochrome P450 monooxygenase (FGSG_08207) and an aminotransferase (FGSG_17085), which theoretically can perform two of the enzymatic steps. The enzymes may however also be involved in biosynthesis of dehydroalanine or modification of the polyketide. The dehydro-Ala residue can be a result of cyclization, where serine is dehydrated. The last gene of the cluster encodes a protein with an A/B barrel domain found in variable enzymes, which hampers functional prediction. The polypeptide is Fusaristatin A biosynthesis cluster protein FGSG_08206 (Gibberella zeae (strain ATCC MYA-4620 / CBS 123657 / FGSC 9075 / NRRL 31084 / PH-1) (Wheat head blight fungus)).